We begin with the raw amino-acid sequence, 780 residues long: B3 domain-containing transcription repressor VAL2 (780 aa).

The segment at residues phenylalanine 286 to threonine 387 is a DNA-binding region (TF-B3). The segment at threonine 515–proline 565 adopts a CW-type zinc-finger fold. The Zn(2+) site is built by cysteine 524, cysteine 527, cysteine 545, and cysteine 557. 3 disordered regions span residues glutamate 577–threonine 608, lysine 669–glutamate 695, and asparagine 743–asparagine 780. The span at alanine 584 to glycine 603 shows a compositional bias: polar residues. The span at glutamate 674 to serine 686 shows a compositional bias: low complexity. Residues asparagine 743 to glutamine 765 are compositionally biased toward polar residues.

Its subcellular location is the nucleus. Transcriptional repressor of gene expression involved in embryonic pathways, such as LEC1, ABI3, and FUS3. Repressor of the sugar-inducible genes involved in the seed maturation program in seedlings. Plays an essential role in regulating the transition from seed maturation to seedling growth. Functionally redundant with VAL1/HSI2. The sequence is that of B3 domain-containing transcription repressor VAL2 (VAL2) from Arabidopsis thaliana (Mouse-ear cress).